Consider the following 806-residue polypeptide: Protein translocase subunit SecA (806 aa).

Residues Gln87, 105 to 109 (GEGKT), and Asp493 each bind ATP.

This sequence belongs to the SecA family. As to quaternary structure, monomer and homodimer. Part of the essential Sec protein translocation apparatus which comprises SecA, SecYEG and auxiliary proteins SecDF. Other proteins may also be involved.

It is found in the cell membrane. The protein resides in the cytoplasm. It carries out the reaction ATP + H2O + cellular proteinSide 1 = ADP + phosphate + cellular proteinSide 2.. In terms of biological role, part of the Sec protein translocase complex. Interacts with the SecYEG preprotein conducting channel. Has a central role in coupling the hydrolysis of ATP to the transfer of proteins into and across the cell membrane, serving as an ATP-driven molecular motor driving the stepwise translocation of polypeptide chains across the membrane. The polypeptide is Protein translocase subunit SecA (Mycoplasma genitalium (strain ATCC 33530 / DSM 19775 / NCTC 10195 / G37) (Mycoplasmoides genitalium)).